A 570-amino-acid chain; its full sequence is MRARSALPRSALPRLLLPLLLLPAAGPAQFHGEKGISIPDHGFCQPISIPLCTDIAYNQTIMPNLLGHTNQEDAGLEVHQFYPLVKVQCSPELRFFLCSMYAPVCTVLEQAIPPCRSICERARQGCEALMNKFGFQWPERLRCEHFPRHGAEQICVGQNHSEDGAPALLTTAPPSGLQPGAGGTPGGPGGGGSPPRYATLEHPFHCPRVLKVPSYLSYKFLGERDCAAPCEPARPDGSMFFSQEETRFARLWILTWSVLCCASTFFTVTTYLVDMQRFRYPERPIIFLSGCYTMVSVAYIAGFVLQERVVCNERFSEDGYRTVVQGTKKEGCTILFMMLYFFSMASSIWWVILSLTWFLAAGMKWGHEAIEANSQYFHLAAWAVPAVKTITILAMGQIDGDLLSGVCFVGLNSLDPLRGFVLAPLFVYLFIGTSFLLAGFVSLFRIRTIMKHDGTKTEKLERLMVRIGVFSVLYTVPATIVIACYFYEQAFREHWERSWVSQHCKSLAIPCPAHYTPRMSPDFTVYMIKYLMTLIVGITSGFWIWSGKTLHSWRKFYTRLTNSRHGETTV.

Residues 1–28 form the signal peptide; the sequence is MRARSALPRSALPRLLLPLLLLPAAGPA. Topologically, residues 29 to 252 are extracellular; sequence QFHGEKGISI…QEETRFARLW (224 aa). One can recognise an FZ domain in the interval 39-158; it reads PDHGFCQPIS…HGAEQICVGQ (120 aa). Disulfide bonds link Cys44–Cys105, Cys52–Cys98, Cys89–Cys126, Cys115–Cys155, and Cys119–Cys143. The N-linked (GlcNAc...) asparagine glycan is linked to Asn58. Asn159 is a glycosylation site (N-linked (GlcNAc...) asparagine). The interval 166–194 is disordered; that stretch reads PALLTTAPPSGLQPGAGGTPGGPGGGGSP. The span at 179–193 shows a compositional bias: gly residues; the sequence is PGAGGTPGGPGGGGS. A helical transmembrane segment spans residues 253 to 273; sequence ILTWSVLCCASTFFTVTTYLV. At 274 to 284 the chain is on the cytoplasmic side; it reads DMQRFRYPERP. Residues 285-305 traverse the membrane as a helical segment; the sequence is IIFLSGCYTMVSVAYIAGFVL. Over 306–332 the chain is Extracellular; that stretch reads QERVVCNERFSEDGYRTVVQGTKKEGC. The chain crosses the membrane as a helical span at residues 333–353; the sequence is TILFMMLYFFSMASSIWWVIL. Over 354 to 375 the chain is Cytoplasmic; the sequence is SLTWFLAAGMKWGHEAIEANSQ. The helical transmembrane segment at 376–396 threads the bilayer; sequence YFHLAAWAVPAVKTITILAMG. The Extracellular segment spans residues 397 to 419; the sequence is QIDGDLLSGVCFVGLNSLDPLRG. The helical transmembrane segment at 420-440 threads the bilayer; the sequence is FVLAPLFVYLFIGTSFLLAGF. Over 441–466 the chain is Cytoplasmic; it reads VSLFRIRTIMKHDGTKTEKLERLMVR. Residues 467-487 form a helical membrane-spanning segment; that stretch reads IGVFSVLYTVPATIVIACYFY. Topologically, residues 488-524 are extracellular; the sequence is EQAFREHWERSWVSQHCKSLAIPCPAHYTPRMSPDFT. The chain crosses the membrane as a helical span at residues 525 to 545; it reads VYMIKYLMTLIVGITSGFWIW. Residues 546–570 lie on the Cytoplasmic side of the membrane; that stretch reads SGKTLHSWRKFYTRLTNSRHGETTV. The Lys-Thr-X-X-X-Trp motif, mediates interaction with the PDZ domain of Dvl family members motif lies at 548–553; it reads KTLHSW. Positions 568–570 match the PDZ-binding motif; it reads TTV.

The protein belongs to the G-protein coupled receptor Fz/Smo family. In terms of processing, ubiquitinated by ZNRF3, leading to its degradation by the proteasome. As to expression, expressed in embryonic and adult heart, lung, chondrocytes and brain. Also expressed in the developing gastrointestinal tract (strongest in foregut), much weaker expression in the adult. No expression in fetal liver and adult spleen. Up-regulated in esophageal squamous cell carcinomas.

Its subcellular location is the membrane. The protein localises to the cell membrane. Its function is as follows. Receptor for Wnt proteins. Most of frizzled receptors are coupled to the beta-catenin canonical signaling pathway, which leads to the activation of disheveled proteins, inhibition of GSK-3 kinase, nuclear accumulation of beta-catenin and activation of Wnt target genes. A second signaling pathway involving PKC and calcium fluxes has been seen for some family members, but it is not yet clear if it represents a distinct pathway or if it can be integrated in the canonical pathway, as PKC seems to be required for Wnt-mediated inactivation of GSK-3 kinase. Both pathways seem to involve interactions with G-proteins. May be involved in transduction and intercellular transmission of polarity information during tissue morphogenesis and/or in differentiated tissues. The chain is Frizzled-2 (Fzd2) from Mus musculus (Mouse).